The sequence spans 381 residues: Succinyl-diaminopimelate desuccinylase (381 aa).

Zn(2+) is bound at residue His-71. Asp-73 is an active-site residue. Asp-104 contacts Zn(2+). The Proton acceptor role is filled by Glu-138. Positions 139, 167, and 353 each coordinate Zn(2+).

The protein belongs to the peptidase M20A family. DapE subfamily. In terms of assembly, homodimer. It depends on Zn(2+) as a cofactor. Requires Co(2+) as cofactor.

It carries out the reaction N-succinyl-(2S,6S)-2,6-diaminopimelate + H2O = (2S,6S)-2,6-diaminopimelate + succinate. It functions in the pathway amino-acid biosynthesis; L-lysine biosynthesis via DAP pathway; LL-2,6-diaminopimelate from (S)-tetrahydrodipicolinate (succinylase route): step 3/3. Its function is as follows. Catalyzes the hydrolysis of N-succinyl-L,L-diaminopimelic acid (SDAP), forming succinate and LL-2,6-diaminopimelate (DAP), an intermediate involved in the bacterial biosynthesis of lysine and meso-diaminopimelic acid, an essential component of bacterial cell walls. The protein is Succinyl-diaminopimelate desuccinylase of Shewanella pealeana (strain ATCC 700345 / ANG-SQ1).